Consider the following 305-residue polypeptide: tRNA pseudouridine synthase B (305 aa).

The active-site Nucleophile is the aspartate 39.

This sequence belongs to the pseudouridine synthase TruB family. Type 1 subfamily.

The catalysed reaction is uridine(55) in tRNA = pseudouridine(55) in tRNA. In terms of biological role, responsible for synthesis of pseudouridine from uracil-55 in the psi GC loop of transfer RNAs. In Staphylococcus saprophyticus subsp. saprophyticus (strain ATCC 15305 / DSM 20229 / NCIMB 8711 / NCTC 7292 / S-41), this protein is tRNA pseudouridine synthase B.